Consider the following 587-residue polypeptide: Aspartate--tRNA(Asp/Asn) ligase (587 aa).

Glu-173 lines the L-aspartate pocket. Residues Gln-197–Lys-200 are aspartate. Arg-219 lines the L-aspartate pocket. ATP contacts are provided by residues Arg-219–Glu-221 and Gln-228. His-448 is an L-aspartate binding site. Glu-481 contacts ATP. Arg-488 lines the L-aspartate pocket. Gly-533 to Arg-536 is a binding site for ATP.

It belongs to the class-II aminoacyl-tRNA synthetase family. Type 1 subfamily. Homodimer.

It is found in the cytoplasm. The catalysed reaction is tRNA(Asx) + L-aspartate + ATP = L-aspartyl-tRNA(Asx) + AMP + diphosphate. In terms of biological role, aspartyl-tRNA synthetase with relaxed tRNA specificity since it is able to aspartylate not only its cognate tRNA(Asp) but also tRNA(Asn). Reaction proceeds in two steps: L-aspartate is first activated by ATP to form Asp-AMP and then transferred to the acceptor end of tRNA(Asp/Asn). The polypeptide is Aspartate--tRNA(Asp/Asn) ligase (Alcanivorax borkumensis (strain ATCC 700651 / DSM 11573 / NCIMB 13689 / SK2)).